The chain runs to 799 residues: Ribosome biogenesis protein BOP1 homolog (799 aa).

The tract at residues 1–171 (MPRRVRAQKR…DDTSDEEHSL (171 aa)) is disordered. The segment covering 58–69 (SESDVTDDEQID) has biased composition (acidic residues). Over residues 70 to 81 (EEARQADRDLLK) the composition is skewed to basic and acidic residues. Residues 93–121 (DPSDADNDDDDDEEEAASDDDDEEEDAEP) are compositionally biased toward acidic residues. Low complexity predominate over residues 122–132 (SSDSSNEASDA). WD repeat units follow at residues 457 to 498 (GHKA…RVVT), 500 to 538 (DAEV…AAID), 584 to 626 (PHHA…TQHP), 629 to 669 (KRNR…KKLL), 670 to 709 (TGVR…KPYK), 713 to 752 (YHKY…DLGQ), and 769 to 799 (SDGM…KLHV).

This sequence belongs to the WD repeat BOP1/ERB1 family.

Its subcellular location is the nucleus. It is found in the nucleolus. The protein resides in the nucleoplasm. Required for maturation of ribosomal RNAs and formation of the large ribosomal subunit. The polypeptide is Ribosome biogenesis protein BOP1 homolog (Monosiga brevicollis (Choanoflagellate)).